The chain runs to 157 residues: S-ribosylhomocysteine lyase (157 aa).

Fe cation-binding residues include His54, His58, and Cys124.

This sequence belongs to the LuxS family. Homodimer. The cofactor is Fe cation.

It carries out the reaction S-(5-deoxy-D-ribos-5-yl)-L-homocysteine = (S)-4,5-dihydroxypentane-2,3-dione + L-homocysteine. Its function is as follows. Involved in the synthesis of autoinducer 2 (AI-2) which is secreted by bacteria and is used to communicate both the cell density and the metabolic potential of the environment. The regulation of gene expression in response to changes in cell density is called quorum sensing. Catalyzes the transformation of S-ribosylhomocysteine (RHC) to homocysteine (HC) and 4,5-dihydroxy-2,3-pentadione (DPD). The protein is S-ribosylhomocysteine lyase of Lactobacillus acidophilus (strain ATCC 700396 / NCK56 / N2 / NCFM).